The sequence spans 1163 residues: DNA-directed RNA polymerase subunit beta'' (1163 aa).

Residues Cys-16, Cys-87, Cys-94, and Cys-97 each coordinate Zn(2+).

The protein belongs to the RNA polymerase beta' chain family. RpoC2 subfamily. In plastids the minimal PEP RNA polymerase catalytic core is composed of four subunits: alpha, beta, beta', and beta''. When a (nuclear-encoded) sigma factor is associated with the core the holoenzyme is formed, which can initiate transcription. Zn(2+) serves as cofactor.

Its subcellular location is the plastid. The protein localises to the chloroplast. It catalyses the reaction RNA(n) + a ribonucleoside 5'-triphosphate = RNA(n+1) + diphosphate. In terms of biological role, DNA-dependent RNA polymerase catalyzes the transcription of DNA into RNA using the four ribonucleoside triphosphates as substrates. The polypeptide is DNA-directed RNA polymerase subunit beta'' (rpoC2) (Pisum sativum (Garden pea)).